The primary structure comprises 465 residues: Argininosuccinate lyase (465 aa).

It belongs to the lyase 1 family. Argininosuccinate lyase subfamily.

The protein resides in the cytoplasm. The enzyme catalyses 2-(N(omega)-L-arginino)succinate = fumarate + L-arginine. It participates in amino-acid biosynthesis; L-arginine biosynthesis; L-arginine from L-ornithine and carbamoyl phosphate: step 3/3. This is Argininosuccinate lyase from Rhodopseudomonas palustris (strain BisB5).